The primary structure comprises 430 residues: Lipoyl synthase, mitochondrial (430 aa).

The N-terminal 37 residues, 1 to 37, are a transit peptide targeting the mitochondrion; sequence MAASTGKLRTLFSAHSSLSARPSSALPALRLTILRSY. Residues 40 to 56 show a composition bias toward low complexity; the sequence is TTPPDSSISDPSNSSTT. Residues 40-63 are disordered; that stretch reads TTPPDSSISDPSNSSTTVKRPPTA. [4Fe-4S] cluster-binding residues include cysteine 141, cysteine 146, cysteine 152, cysteine 172, cysteine 176, cysteine 179, and serine 387. Residues 155-376 enclose the Radical SAM core domain; sequence GSSKSAATAT…KERALEMGFL (222 aa).

The protein belongs to the radical SAM superfamily. Lipoyl synthase family. It depends on [4Fe-4S] cluster as a cofactor.

The protein resides in the mitochondrion. The catalysed reaction is [[Fe-S] cluster scaffold protein carrying a second [4Fe-4S](2+) cluster] + N(6)-octanoyl-L-lysyl-[protein] + 2 oxidized [2Fe-2S]-[ferredoxin] + 2 S-adenosyl-L-methionine + 4 H(+) = [[Fe-S] cluster scaffold protein] + N(6)-[(R)-dihydrolipoyl]-L-lysyl-[protein] + 4 Fe(3+) + 2 hydrogen sulfide + 2 5'-deoxyadenosine + 2 L-methionine + 2 reduced [2Fe-2S]-[ferredoxin]. It participates in protein modification; protein lipoylation via endogenous pathway; protein N(6)-(lipoyl)lysine from octanoyl-[acyl-carrier-protein]: step 2/2. Functionally, catalyzes the radical-mediated insertion of two sulfur atoms into the C-6 and C-8 positions of the octanoyl moiety bound to the lipoyl domains of lipoate-dependent enzymes, thereby converting the octanoylated domains into lipoylated derivatives. The chain is Lipoyl synthase, mitochondrial from Ajellomyces dermatitidis (strain ER-3 / ATCC MYA-2586) (Blastomyces dermatitidis).